The following is a 318-amino-acid chain: dTDP-6-deoxy-L-talose 4-dehydrogenase (NAD(P)(+)) (318 aa).

NAD(+)-binding positions include 19–20 (FI), 60–61 (DP), asparagine 95, threonine 120, tyrosine 145, and lysine 149. Positions 120 and 145 each coordinate substrate. The active-site Proton acceptor is tyrosine 145.

This sequence belongs to the NAD(P)-dependent epimerase/dehydratase family.

It catalyses the reaction dTDP-6-deoxy-beta-L-talose + NAD(+) = dTDP-4-dehydro-beta-L-rhamnose + NADH + H(+). It carries out the reaction dTDP-6-deoxy-beta-L-talose + NADP(+) = dTDP-4-dehydro-beta-L-rhamnose + NADPH + H(+). Its function is as follows. Catalyzes the reduction of dTDP-6-deoxy-L-lyxo-4-hexulose to dTDP-6-deoxy-L-talose. Can use NAD(+) or NADP(+). The chain is dTDP-6-deoxy-L-talose 4-dehydrogenase (NAD(P)(+)) (tal) from Kitasatospora kifunensis (Streptomyces kifunensis).